Consider the following 467-residue polypeptide: Amino-acid permease RocE (467 aa).

12 consecutive transmembrane segments (helical) span residues 21-41 (FMISLGGVIGTGFFLGTGFTI), 47-67 (LGAVLSYLVGGFIMFLTMLCL), 87-107 (FISPAFGFAFGWLYWLGWAVT), 122-142 (WFPHIDVWIWCLVFAALMFIL), 162-182 (ILIILLFIILGGAAMFGLIDL), 207-227 (MLITMITVNFAFQGTELIGVA), 246-266 (VWRTLVFFVLSIIVIAGMIPW), 283-303 (IGIPYAADIMNFVILIALLSV), 336-356 (VPMYSLIVTMAVACLSLLTKF), 361-381 (TVYMVLLSLAGMSAQVGWITI), 409-429 (YPVLPLIGLTLNTVVLISLAF), and 435-455 (IALYCGVPFMIICYIIYHVVI).

Belongs to the amino acid-polyamine-organocation (APC) superfamily. Amino acid transporter (AAT) (TC 2.A.3.1) family.

The protein resides in the cell membrane. Functionally, putative transport protein involved in arginine degradative pathway. Probably transports arginine or ornithine. The sequence is that of Amino-acid permease RocE from Bacillus subtilis (strain 168).